Consider the following 107-residue polypeptide: SH3 domain-binding glutamic acid-rich-like protein 2 (107 aa).

The SH3-binding motif lies at 61–67; it reads QGNPLPP.

Belongs to the SH3BGR family.

It localises to the nucleus. This is SH3 domain-binding glutamic acid-rich-like protein 2 (SH3BGRL2) from Bos taurus (Bovine).